The following is a 342-amino-acid chain: Probable transposase for insertion-like sequence element IS1161 (342 aa).

An Integrase catalytic domain is found at 182–342 (IEERPEEINN…KKLFELTQTA (161 aa)).

Belongs to the transposase IS30 family.

Its function is as follows. Required for the transposition of the insertion element. This chain is Probable transposase for insertion-like sequence element IS1161, found in Streptococcus salivarius.